Here is an 822-residue protein sequence, read N- to C-terminus: Fibroblast growth factor receptor 1 (822 aa).

The signal sequence occupies residues 1–21 (MWGWKCLLFWAVLVTATLCTA). At 22-376 (RPAPTLPEQA…AVMTSPLYLE (355 aa)) the chain is on the extracellular side. Residues 25–119 (PTLPEQAQPW…DTTYFSVNVS (95 aa)) enclose the Ig-like C2-type 1 domain. Cysteines 55 and 101 form a disulfide. N77 and N117 each carry an N-linked (GlcNAc...) asparagine glycan. The tract at residues 120–162 (DALPSSEDDDDDDDSSSEEKETDNTKPNRRPVAPYWTSPEKME) is disordered. Over residues 125–135 (SEDDDDDDDSS) the composition is skewed to acidic residues. Residues 136–145 (SEEKETDNTK) are compositionally biased toward basic and acidic residues. Ig-like C2-type domains lie at 158-246 (PEKM…YQLD) and 255-357 (PILQ…AWLT). Residues 160-177 (KMEKKLHAVPAAKTVKFK) form a heparin-binding region. C178 and C230 are joined by a disulfide. N227, N240, N264, N296, N317, and N330 each carry an N-linked (GlcNAc...) asparagine glycan. C277 and C341 are disulfide-bonded. Residues 377 to 397 (IIIYCTGAFLISCMLGSVIIY) traverse the membrane as a helical segment. Topologically, residues 398–822 (KMKSGTKKSD…QLANSGLKRR (425 aa)) are cytoplasmic. The residue at position 463 (Y463) is a Phosphotyrosine; by autocatalysis. One can recognise a Protein kinase domain in the interval 478 to 767 (LVLGKPLGEG…VALTSNQEYL (290 aa)). Residues 484–490 (LGEGCFG), K514, 562–564 (EYA), and N568 contribute to the ATP site. Phosphotyrosine; by autocatalysis is present on residues Y583 and Y585. D623 acts as the Proton acceptor in catalysis. ATP contacts are provided by R627 and D641. A phosphotyrosine; by autocatalysis mark is found at Y653, Y654, Y730, and Y766. Polar residues predominate over residues 782–792 (DTRSSTCSSGE). The interval 782–822 (DTRSSTCSSGEDSVFSHEPLPEEPCLPRHPTQLANSGLKRR) is disordered.

This sequence belongs to the protein kinase superfamily. Tyr protein kinase family. Fibroblast growth factor receptor subfamily. As to quaternary structure, monomer. Homodimer after ligand binding. Interacts predominantly with FGF1 and FGF2, but can also interact with FGF3, FGF4, FGF5, FGF6, FGF8, FGF10, FGF19, FGF21, FGF22 and FGF23 (in vitro). Ligand specificity is determined by tissue-specific expression of isoforms, and differences in the third Ig-like domain are crucial for ligand specificity. Affinity for fibroblast growth factors (FGFs) is increased by heparan sulfate glycosaminoglycans that function as coreceptors. Likewise, KLB increases the affinity for FGF19, FGF21 and FGF23. Interacts (phosphorylated on Tyr-766) with PLCG1 (via SH2 domains). Interacts with FRS2. Interacts with RPS6KA1. Interacts (via C-terminus) with NEDD4 (via WW3 domain). Interacts with KL. Interacts with SHB (via SH2 domain). Interacts with GRB10. Interacts with ANOS1; this interaction does not interfere with FGF2-binding to FGFR1, but prevents binding of heparin-bound FGF2. Interacts with SOX2 and SOX3. Interacts with FLRT1, FLRT2 and FLRT3. Found in a ternary complex with FGF1 and ITGAV:ITGB3. Post-translationally, autophosphorylated. Binding of FGF family members together with heparan sulfate proteoglycan or heparin promotes receptor dimerization and autophosphorylation on tyrosine residues. Autophosphorylation occurs in trans between the two FGFR molecules present in the dimer and proceeds in a highly ordered manner. Initial autophosphorylation at Tyr-653 increases the kinase activity by a factor of 50 to 100. After this, Tyr-583 becomes phosphorylated, followed by phosphorylation of Tyr-463, Tyr-766, Tyr-583 and Tyr-585. In a third stage, Tyr-654 is autophosphorylated, resulting in a further tenfold increase of kinase activity. Phosphotyrosine residues provide docking sites for interacting proteins and so are crucial for FGFR1 function and its regulation. In terms of processing, ubiquitinated. FGFR1 is rapidly ubiquitinated by NEDD4 after autophosphorylation, leading to internalization and lysosomal degradation. CBL is recruited to activated FGFR1 via FRS2 and GRB2, and mediates ubiquitination and subsequent degradation of FGFR1. N-glycosylated in the endoplasmic reticulum. The N-glycan chains undergo further maturation to an Endo H-resistant form in the Golgi apparatus. Widely expressed.

It is found in the cell membrane. Its subcellular location is the nucleus. The protein resides in the cytoplasm. It localises to the cytosol. The protein localises to the cytoplasmic vesicle. It catalyses the reaction L-tyrosyl-[protein] + ATP = O-phospho-L-tyrosyl-[protein] + ADP + H(+). With respect to regulation, present in an inactive conformation in the absence of bound ligand. Ligand binding leads to dimerization and activation by sequential autophosphorylation on tyrosine residues. Functionally, tyrosine-protein kinase that acts as a cell-surface receptor for fibroblast growth factors and plays an essential role in the regulation of embryonic development, cell proliferation, differentiation and migration. Required for normal mesoderm patterning and correct axial organization during embryonic development, normal skeletogenesis and normal development of the gonadotropin-releasing hormone (GnRH) neuronal system. Phosphorylates PLCG1, FRS2, GAB1 and SHB. Ligand binding leads to the activation of several signaling cascades. Activation of PLCG1 leads to the production of the cellular signaling molecules diacylglycerol and inositol 1,4,5-trisphosphate. Phosphorylation of FRS2 triggers recruitment of GRB2, GAB1, PIK3R1 and SOS1, and mediates activation of RAS, MAPK1/ERK2, MAPK3/ERK1 and the MAP kinase signaling pathway, as well as of the AKT1 signaling pathway. Promotes phosphorylation of SHC1, STAT1 and PTPN11/SHP2. In the nucleus, enhances RPS6KA1 and CREB1 activity and contributes to the regulation of transcription. FGFR1 signaling is down-regulated by IL17RD/SEF, and by FGFR1 ubiquitination, internalization and degradation. The chain is Fibroblast growth factor receptor 1 (Fgfr1) from Mus musculus (Mouse).